The following is a 339-amino-acid chain: HTH-type transcriptional regulator PtxS (339 aa).

The HTH lacI-type domain occupies 12–67 (VTISEVARVAGVSKATVSRYIGGDRQLLAEATAKRLEEVIERLGYRPNQMARGLKR). A DNA-binding region (H-T-H motif) is located at residues 14–33 (ISEVARVAGVSKATVSRYIG).

In terms of assembly, homodimer in solution.

Its activity is regulated as follows. 2-ketogluconate acts as a molecular effector and causes dissociation of PtxS from its target promoter. Negatively regulates glucose metabolism by binding directly to the promoter region of the kgu and gad operons. It also negatively regulates its own synthesis. This is HTH-type transcriptional regulator PtxS from Pseudomonas putida (strain ATCC 47054 / DSM 6125 / CFBP 8728 / NCIMB 11950 / KT2440).